The chain runs to 410 residues: LL-diaminopimelate aminotransferase (410 aa).

The substrate site is built by Y15 and G42. Pyridoxal 5'-phosphate is bound by residues Y72, A108–K109, Y132, N188, Y219, and S247–S249. Positions 109, 132, and 188 each coordinate substrate. K250 is subject to N6-(pyridoxal phosphate)lysine. The pyridoxal 5'-phosphate site is built by R258 and N293. Residues N293 and R389 each contribute to the substrate site.

This sequence belongs to the class-I pyridoxal-phosphate-dependent aminotransferase family. LL-diaminopimelate aminotransferase subfamily. In terms of assembly, homodimer. Pyridoxal 5'-phosphate is required as a cofactor.

It catalyses the reaction (2S,6S)-2,6-diaminopimelate + 2-oxoglutarate = (S)-2,3,4,5-tetrahydrodipicolinate + L-glutamate + H2O + H(+). The protein operates within amino-acid biosynthesis; L-lysine biosynthesis via DAP pathway; LL-2,6-diaminopimelate from (S)-tetrahydrodipicolinate (aminotransferase route): step 1/1. In terms of biological role, involved in the synthesis of meso-diaminopimelate (m-DAP or DL-DAP), required for both lysine and peptidoglycan biosynthesis. Catalyzes the direct conversion of tetrahydrodipicolinate to LL-diaminopimelate. Can also use m-DAP instead of LL-DAP as the amino-group donor. The chain is LL-diaminopimelate aminotransferase from Bacteroides fragilis (strain ATCC 25285 / DSM 2151 / CCUG 4856 / JCM 11019 / LMG 10263 / NCTC 9343 / Onslow / VPI 2553 / EN-2).